The primary structure comprises 310 residues: Probable manganese-dependent inorganic pyrophosphatase (310 aa).

Mn(2+) contacts are provided by His-10, Asp-14, Asp-16, Asp-75, His-97, and Asp-149.

The protein belongs to the PPase class C family. Mn(2+) is required as a cofactor.

It is found in the cytoplasm. The catalysed reaction is diphosphate + H2O = 2 phosphate + H(+). The sequence is that of Probable manganese-dependent inorganic pyrophosphatase from Clostridium acetobutylicum (strain ATCC 824 / DSM 792 / JCM 1419 / IAM 19013 / LMG 5710 / NBRC 13948 / NRRL B-527 / VKM B-1787 / 2291 / W).